A 189-amino-acid polypeptide reads, in one-letter code: Elongation factor P (189 aa).

N6-(3,6-diaminohexanoyl)-5-hydroxylysine is present on Lys-34.

It belongs to the elongation factor P family. May be beta-lysylated on the epsilon-amino group of Lys-34 by the combined action of EpmA and EpmB, and then hydroxylated on the C5 position of the same residue by EpmC (if this protein is present). Lysylation is critical for the stimulatory effect of EF-P on peptide-bond formation. The lysylation moiety may extend toward the peptidyltransferase center and stabilize the terminal 3-CCA end of the tRNA. Hydroxylation of the C5 position on Lys-34 may allow additional potential stabilizing hydrogen-bond interactions with the P-tRNA.

Its subcellular location is the cytoplasm. It functions in the pathway protein biosynthesis; polypeptide chain elongation. In terms of biological role, involved in peptide bond synthesis. Alleviates ribosome stalling that occurs when 3 or more consecutive Pro residues or the sequence PPG is present in a protein, possibly by augmenting the peptidyl transferase activity of the ribosome. Modification of Lys-34 is required for alleviation. This chain is Elongation factor P, found in Saccharophagus degradans (strain 2-40 / ATCC 43961 / DSM 17024).